We begin with the raw amino-acid sequence, 665 residues long: DNA ligase (665 aa).

Residues 31 to 35 (DKEFD), 80 to 81 (SL), and glutamate 110 each bind NAD(+). Residue lysine 112 is the N6-AMP-lysine intermediate of the active site. Residues arginine 133, glutamate 170, lysine 285, and lysine 309 each coordinate NAD(+). Positions 403, 406, 421, and 427 each coordinate Zn(2+). One can recognise a BRCT domain in the interval 587–665 (GHTDKLAGQS…NEEEFLKLIS (79 aa)).

This sequence belongs to the NAD-dependent DNA ligase family. LigA subfamily. Requires Mg(2+) as cofactor. It depends on Mn(2+) as a cofactor.

It carries out the reaction NAD(+) + (deoxyribonucleotide)n-3'-hydroxyl + 5'-phospho-(deoxyribonucleotide)m = (deoxyribonucleotide)n+m + AMP + beta-nicotinamide D-nucleotide.. DNA ligase that catalyzes the formation of phosphodiester linkages between 5'-phosphoryl and 3'-hydroxyl groups in double-stranded DNA using NAD as a coenzyme and as the energy source for the reaction. It is essential for DNA replication and repair of damaged DNA. The sequence is that of DNA ligase from Bacteroides fragilis (strain ATCC 25285 / DSM 2151 / CCUG 4856 / JCM 11019 / LMG 10263 / NCTC 9343 / Onslow / VPI 2553 / EN-2).